Reading from the N-terminus, the 384-residue chain is Putative sarcosine oxidase (384 aa).

An FAD-binding site is contributed by 6–36 (DVVVVGAGIFGSCTAYNCQKIGLKTLLLEQF). Cysteine 315 carries the post-translational modification S-8alpha-FAD cysteine.

The protein belongs to the MSOX/MTOX family. The cofactor is FAD.

The enzyme catalyses sarcosine + O2 + H2O = formaldehyde + glycine + H2O2. This is Putative sarcosine oxidase from Caenorhabditis elegans.